The following is a 29-amino-acid chain: Potassium channel toxin alpha-KTx 8.4 (29 aa).

Intrachain disulfides connect Cys-3–Cys-19, Cys-6–Cys-24, and Cys-10–Cys-26.

This sequence belongs to the short scorpion toxin superfamily. Potassium channel inhibitor family. Alpha-KTx 08 subfamily. As to expression, expressed by the venom gland.

Its subcellular location is the secreted. In terms of biological role, inhibits voltage-gated potassium channels. The chain is Potassium channel toxin alpha-KTx 8.4 from Leiurus hebraeus (Hebrew deathstalker scorpion).